A 467-amino-acid chain; its full sequence is Fumarate hydratase class II (467 aa).

Residues 98–100 (SGT), R126, 129–132 (HPND), 139–141 (SSN), and T187 each bind substrate. H188 (proton donor/acceptor) is an active-site residue. Residue S318 is part of the active site. Substrate-binding positions include S319 and 324 to 326 (KVN).

It belongs to the class-II fumarase/aspartase family. Fumarase subfamily. Homotetramer.

It localises to the cytoplasm. It carries out the reaction (S)-malate = fumarate + H2O. It participates in carbohydrate metabolism; tricarboxylic acid cycle; (S)-malate from fumarate: step 1/1. In terms of biological role, involved in the TCA cycle. Catalyzes the stereospecific interconversion of fumarate to L-malate. The chain is Fumarate hydratase class II from Escherichia coli O157:H7.